The following is a 288-amino-acid chain: UDP-3-O-acyl-N-acetylglucosamine deacetylase (288 aa).

Zn(2+)-binding residues include H79, H236, and D240. The active-site Proton donor is H263.

It belongs to the LpxC family. It depends on Zn(2+) as a cofactor.

It catalyses the reaction a UDP-3-O-[(3R)-3-hydroxyacyl]-N-acetyl-alpha-D-glucosamine + H2O = a UDP-3-O-[(3R)-3-hydroxyacyl]-alpha-D-glucosamine + acetate. It participates in glycolipid biosynthesis; lipid IV(A) biosynthesis; lipid IV(A) from (3R)-3-hydroxytetradecanoyl-[acyl-carrier-protein] and UDP-N-acetyl-alpha-D-glucosamine: step 2/6. Its function is as follows. Catalyzes the hydrolysis of UDP-3-O-myristoyl-N-acetylglucosamine to form UDP-3-O-myristoylglucosamine and acetate, the committed step in lipid A biosynthesis. The polypeptide is UDP-3-O-acyl-N-acetylglucosamine deacetylase (Rickettsia felis (strain ATCC VR-1525 / URRWXCal2) (Rickettsia azadi)).